Reading from the N-terminus, the 229-residue chain is E3 ubiquitin ligase TRIM40 (229 aa).

The segment at 14-57 adopts an RING-type zinc-finger fold; that stretch reads CPICQESLKEAVSTNCGHLFCRVCLTQHVEKASASGVFCCPLCR. The B box-type zinc finger occupies 66–107; that stretch reads GTGYICPNHQKRVCRFCEESRLLLCVECLVSPEHMSHHELTI. 4 residues coordinate Zn(2+): Cys-71, His-74, Cys-93, and His-99. Positions 107–154 form a coiled coil; sequence IENALSHYKERLNRRSRKLRKDIAELQRLKAQQEKKLQALQQWLGQLE.

The protein belongs to the TRIM/RBCC family. In terms of assembly, interacts with NEDD8.

It catalyses the reaction S-ubiquitinyl-[E2 ubiquitin-conjugating enzyme]-L-cysteine + [acceptor protein]-L-lysine = [E2 ubiquitin-conjugating enzyme]-L-cysteine + N(6)-ubiquitinyl-[acceptor protein]-L-lysine.. E3 ubiquitin-protein ligase that plays a role in the limitation of the innate immune response. Mediates inhibition of the RLR signaling pathway by ubiquitinating RIGI and IFIH1 receptors, leading to their proteasomal degradation. Also promotes the neddylation of IKBKG/NEMO, stabilizing NFKBIA, and thereby inhibiting of NF-kappa-B nuclear translocation and activation. This Pan troglodytes (Chimpanzee) protein is E3 ubiquitin ligase TRIM40 (TRIM40).